The chain runs to 241 residues: Ribonuclease HII (241 aa).

Residues 27-227 (GPVAGVDEAG…REARSLRLED (201 aa)) enclose the RNase H type-2 domain. A divalent metal cation is bound by residues Asp-33, Glu-34, and Asp-128.

Belongs to the RNase HII family. Requires Mn(2+) as cofactor. The cofactor is Mg(2+).

It is found in the cytoplasm. The enzyme catalyses Endonucleolytic cleavage to 5'-phosphomonoester.. In terms of biological role, endonuclease that specifically degrades the RNA of RNA-DNA hybrids. The chain is Ribonuclease HII from Frankia alni (strain DSM 45986 / CECT 9034 / ACN14a).